The following is a 184-amino-acid chain: MITMKDIIKEGHPTLRKVAEPVPLPPSEEDKRILQSLLDYVKMSQDPELAAKYGLRPGIGLAAPQINVSKRMIAVHVTDENGTLYSYALFNPKIVSHSVQQCYLTTGEGCLSVDRDVPGYVLRYARITVTGTTLDGEEVTLRLKGLPAIVFQHEIDHLNGIMFYDRINPADPFQVPDGAIPIGR.

Fe cation is bound by residues cysteine 110 and histidine 153. The active site involves glutamate 154. Histidine 157 is a Fe cation binding site.

The protein belongs to the polypeptide deformylase family. It depends on Fe(2+) as a cofactor.

It catalyses the reaction N-terminal N-formyl-L-methionyl-[peptide] + H2O = N-terminal L-methionyl-[peptide] + formate. In terms of biological role, removes the formyl group from the N-terminal Met of newly synthesized proteins. Requires at least a dipeptide for an efficient rate of reaction. N-terminal L-methionine is a prerequisite for activity but the enzyme has broad specificity at other positions. The sequence is that of Peptide deformylase 2 from Geobacillus stearothermophilus (Bacillus stearothermophilus).